Reading from the N-terminus, the 84-residue chain is U4-theraphotoxin-Hhn1a (84 aa).

An N-terminal signal peptide occupies residues 1 to 22 (MKVTLIAILTRAAVLVLHTTAA). The propeptide occupies 23-47 (EELEESQLMEVSMPDTELAAVDEER). 3 disulfide bridges follow: C51/C65, C55/C76, and C70/C81.

Belongs to the neurotoxin 12 (Hwtx-2) family. 02 (Hwtx-2) subfamily. In terms of tissue distribution, expressed by the venom gland.

It is found in the secreted. Functionally, postsynaptic neurotoxin. The protein is U4-theraphotoxin-Hhn1a of Cyriopagopus hainanus (Chinese bird spider).